A 306-amino-acid polypeptide reads, in one-letter code: Peroxisome biogenesis factor 10 (306 aa).

Over 1–52 (MHLSAHIDPLQIILCTEIDEACIQFIKSQIEGIARACGPRMQANFEGVLIPY) the chain is Peroxisomal matrix. The helical transmembrane segment at 53 to 84 (VDVLGKFLYRACCLRYATMGEEAARIVLAKQD) threads the bilayer. At 85–147 (RSKGLVLATT…PEAVISKEKH (63 aa)) the chain is on the cytoplasmic side. Residues 148–174 (LVYILNSFKPILLKLVSIIRFLCLTMK) traverse the membrane as a helical segment. The Peroxisomal matrix segment spans residues 175 to 202 (GHCATVSQLLLGLKYISLDEINPEEKKK). The helical transmembrane segment at 203–219 (VLTLLLLLGSRLIASIL) threads the bilayer. Topologically, residues 220-306 (QHSNSYFDQH…SSPSKIILLR (87 aa)) are cytoplasmic. The Zn(2+) site is built by C256, C259, C271, H273, C276, C279, C290, and C293. The segment at 256 to 294 (CSLCMEFIHCPAATECGHIFCWSCINGWTSKKSECPLCR) adopts an RING-type zinc-finger fold.

It belongs to the pex2/pex10/pex12 family. In terms of assembly, component of the PEX2-PEX10-PEX12 retrotranslocation channel, composed of PEX2, PEX10 and PEX12.

The protein resides in the peroxisome membrane. It catalyses the reaction S-ubiquitinyl-[E2 ubiquitin-conjugating enzyme]-L-cysteine + [acceptor protein]-L-lysine = [E2 ubiquitin-conjugating enzyme]-L-cysteine + N(6)-ubiquitinyl-[acceptor protein]-L-lysine.. Its pathway is protein modification; protein ubiquitination. With respect to regulation, the E3 ubiquitin-protein ligase activity is stimulated by PEX12. Functionally, E3 ubiquitin-protein ligase component of a retrotranslocation channel required for peroxisome organization by mediating export of the PEX5 receptor from peroxisomes to the cytosol, thereby promoting PEX5 recycling. The retrotranslocation channel is composed of PEX2, PEX10 and PEX12; each subunit contributing transmembrane segments that coassemble into an open channel that specifically allows the passage of PEX5 through the peroxisomal membrane. PEX10 also regulates PEX5 recycling by acting as a E3 ubiquitin-protein ligase. When PEX5 recycling is compromised, PEX10 catalyzes polyubiquitination of PEX5 during its passage through the retrotranslocation channel, leading to its degradation. The sequence is that of Peroxisome biogenesis factor 10 (pas4) from Schizosaccharomyces pombe (strain 972 / ATCC 24843) (Fission yeast).